A 248-amino-acid chain; its full sequence is 2,3-bisphosphoglycerate-dependent phosphoglycerate mutase (248 aa).

Substrate is bound by residues 8 to 15 (RHGESEWN), 21 to 22 (TG), arginine 60, 87 to 90 (ERHY), lysine 98, 114 to 115 (RR), and 183 to 184 (GN). The Tele-phosphohistidine intermediate role is filled by histidine 9. Glutamate 87 serves as the catalytic Proton donor/acceptor.

It belongs to the phosphoglycerate mutase family. BPG-dependent PGAM subfamily.

It catalyses the reaction (2R)-2-phosphoglycerate = (2R)-3-phosphoglycerate. It functions in the pathway carbohydrate degradation; glycolysis; pyruvate from D-glyceraldehyde 3-phosphate: step 3/5. Catalyzes the interconversion of 2-phosphoglycerate and 3-phosphoglycerate. This Coprothermobacter proteolyticus (strain ATCC 35245 / DSM 5265 / OCM 4 / BT) protein is 2,3-bisphosphoglycerate-dependent phosphoglycerate mutase.